The primary structure comprises 187 residues: Macro domain-containing protein MM_0177 (187 aa).

The 180-residue stretch at 8–187 (VEEGIRMELN…SIKKALSKIL (180 aa)) folds into the Macro domain.

This sequence belongs to the MacroD-type family.

The sequence is that of Macro domain-containing protein MM_0177 from Methanosarcina mazei (strain ATCC BAA-159 / DSM 3647 / Goe1 / Go1 / JCM 11833 / OCM 88) (Methanosarcina frisia).